The chain runs to 209 residues: ATP-dependent Clp protease proteolytic subunit (209 aa).

Ser-106 (nucleophile) is an active-site residue. His-131 is a catalytic residue.

Belongs to the peptidase S14 family. Fourteen ClpP subunits assemble into 2 heptameric rings which stack back to back to give a disk-like structure with a central cavity, resembling the structure of eukaryotic proteasomes.

It localises to the cytoplasm. The enzyme catalyses Hydrolysis of proteins to small peptides in the presence of ATP and magnesium. alpha-casein is the usual test substrate. In the absence of ATP, only oligopeptides shorter than five residues are hydrolyzed (such as succinyl-Leu-Tyr-|-NHMec, and Leu-Tyr-Leu-|-Tyr-Trp, in which cleavage of the -Tyr-|-Leu- and -Tyr-|-Trp bonds also occurs).. Its function is as follows. Cleaves peptides in various proteins in a process that requires ATP hydrolysis. Has a chymotrypsin-like activity. Plays a major role in the degradation of misfolded proteins. This chain is ATP-dependent Clp protease proteolytic subunit, found in Brucella canis (strain ATCC 23365 / NCTC 10854 / RM-666).